The chain runs to 216 residues: Heart- and neural crest derivatives-expressed protein 1 (216 aa).

Disordered stretches follow at residues 1-20, 53-109, and 165-203; these read MNLV…HPPH, APDF…RTES, and ELKK…KGRT. The segment covering 8–18 has biased composition (basic residues); the sequence is AHHHHHHHSHP. Low complexity predominate over residues 65-78; sequence TAVAAAAYGPDARP. Residues 92–104 are compositionally biased toward basic residues; sequence LPKRKGSGPKKER. The bHLH domain maps to 94–146; that stretch reads KRKGSGPKKERRRTESINSAFAELRECIPNVPADTKLSKIKTLRLATSYIAYL. Phosphothreonine; by PLK4 is present on threonine 107. At serine 109 the chain carries Phosphoserine; by PLK4. Positions 165-174 are enriched in basic and acidic residues; that stretch reads ELKKTDGGRE.

Efficient DNA binding requires dimerization with another bHLH protein. Forms homodimers and heterodimers with TCF3 gene products E12 and E47, HAND2 and HEY1, HEY2 and HEYL (hairy-related transcription factors). Interacts with MDFIC. Interacts with SOX15; the interaction enhances HAND1-induced differentiation of trophoblast giant cells. Post-translationally, phosphorylation by PLK4 disrupts the interaction with MDFIC and leads to translocation into the nucleoplasm, allowing dimerization and transcription factor activity. As to expression, smooth muscle cells of the gut and adrenal tissue.

Its subcellular location is the nucleus. The protein localises to the nucleoplasm. It localises to the nucleolus. In terms of biological role, transcription factor that plays an essential role in both trophoblast giant cell differentiation and in cardiac morphogenesis. Binds the DNA sequence 5'-NRTCTG-3' (non-canonical E-box). Acts as a transcriptional repressor of SOX15. In the adult, could be required for ongoing expression of cardiac-specific genes. This chain is Heart- and neural crest derivatives-expressed protein 1 (Hand1), found in Mus musculus (Mouse).